We begin with the raw amino-acid sequence, 150 residues long: Large ribosomal subunit protein bL9 (150 aa).

It belongs to the bacterial ribosomal protein bL9 family.

In terms of biological role, binds to the 23S rRNA. This is Large ribosomal subunit protein bL9 from Photorhabdus laumondii subsp. laumondii (strain DSM 15139 / CIP 105565 / TT01) (Photorhabdus luminescens subsp. laumondii).